A 263-amino-acid polypeptide reads, in one-letter code: uncharacterized protein (263 aa).

To B.subtilis soj.

This is an uncharacterized protein from Pseudomonas putida (strain ATCC 47054 / DSM 6125 / CFBP 8728 / NCIMB 11950 / KT2440).